Consider the following 233-residue polypeptide: Small ribosomal subunit protein uS2 (233 aa).

This sequence belongs to the universal ribosomal protein uS2 family.

In Bacillus mycoides (strain KBAB4) (Bacillus weihenstephanensis), this protein is Small ribosomal subunit protein uS2.